Reading from the N-terminus, the 873-residue chain is Sine oculis-binding protein homolog (873 aa).

Basic and acidic residues predominate over residues 1 to 14 (MAEMEKEGRPPENK). A disordered region spans residues 1 to 26 (MAEMEKEGRPPENKRSRKPAHPVKRE). FCS-type zinc fingers lie at residues 142 to 180 (DDVSNVQIMCAWCQKVGIKRYSLSMGSEVKSFCSEKCFA) and 216 to 256 (FKNN…KCLN). Disordered stretches follow at residues 308 to 339 (RRKAPSPVATAGQSQGPGPSASTTVSPSDTAN), 413 to 484 (RGPP…PGAP), and 550 to 646 (KPPN…PGVL). A compositionally biased stretch (polar residues) spans 318-339 (AGQSQGPGPSASTTVSPSDTAN). Residues 417 to 433 (HHASNPNSPLSNPMLPG) are compositionally biased toward low complexity. The span at 460 to 484 (IHPPSTPTMPGNPPGLLPPPPPGAP) shows a compositional bias: pro residues. Over residues 614–625 (EHGRSEVVDLTR) the composition is skewed to basic and acidic residues. Positions 620-624 (VVDLT) match the SUMO interaction motif 1 (SIM); mediates the binding to polysumoylated substrates motif. Ser629 is subject to Phosphoserine. The short motif at 653–657 (VIDLT) is the SUMO interaction motif 2 (SIM); mediates the binding to polysumoylated substrates element. Residue Lys677 forms a Glycyl lysine isopeptide (Lys-Gly) (interchain with G-Cter in SUMO2) linkage. Ser699 is modified (phosphoserine). The disordered stretch occupies residues 730–771 (AAAEGAKSAEPPPEQPPPPPPPAPPKKLLSPEEPAVSELESV). Residues 739-754 (EPPPEQPPPPPPPAPP) are compositionally biased toward pro residues.

This sequence belongs to the SOBP family. Interacts (via SIM domains) with SUMO1 and SUMO2.

In terms of biological role, implicated in development of the cochlea. The protein is Sine oculis-binding protein homolog of Homo sapiens (Human).